A 30-amino-acid chain; its full sequence is Putative alpha-amylase inhibitor (30 aa).

Belongs to the leguminous lectin family.

Lectin and alpha-amylase inhibitor. Acts as a defensive protein against insects. The chain is Putative alpha-amylase inhibitor from Phaseolus vulgaris (Kidney bean).